The chain runs to 313 residues: Ribosomal RNA small subunit methyltransferase H (313 aa).

S-adenosyl-L-methionine is bound by residues 35–37, D55, F79, D101, and Q108; that span reads GGH.

Belongs to the methyltransferase superfamily. RsmH family.

It localises to the cytoplasm. It carries out the reaction cytidine(1402) in 16S rRNA + S-adenosyl-L-methionine = N(4)-methylcytidine(1402) in 16S rRNA + S-adenosyl-L-homocysteine + H(+). Specifically methylates the N4 position of cytidine in position 1402 (C1402) of 16S rRNA. This chain is Ribosomal RNA small subunit methyltransferase H, found in Enterobacter sp. (strain 638).